The primary structure comprises 189 residues: UPF0398 protein BH1768 (189 aa).

It belongs to the UPF0398 family.

This is UPF0398 protein BH1768 from Halalkalibacterium halodurans (strain ATCC BAA-125 / DSM 18197 / FERM 7344 / JCM 9153 / C-125) (Bacillus halodurans).